Here is an 879-residue protein sequence, read N- to C-terminus: Alanine--tRNA ligase (879 aa).

Residues His-566, His-570, Cys-668, and His-672 each coordinate Zn(2+).

It belongs to the class-II aminoacyl-tRNA synthetase family. Requires Zn(2+) as cofactor.

The protein localises to the cytoplasm. It carries out the reaction tRNA(Ala) + L-alanine + ATP = L-alanyl-tRNA(Ala) + AMP + diphosphate. Catalyzes the attachment of alanine to tRNA(Ala) in a two-step reaction: alanine is first activated by ATP to form Ala-AMP and then transferred to the acceptor end of tRNA(Ala). Also edits incorrectly charged Ser-tRNA(Ala) and Gly-tRNA(Ala) via its editing domain. This Listeria welshimeri serovar 6b (strain ATCC 35897 / DSM 20650 / CCUG 15529 / CIP 8149 / NCTC 11857 / SLCC 5334 / V8) protein is Alanine--tRNA ligase.